A 413-amino-acid chain; its full sequence is 3-oxoacyl-[acyl-carrier-protein] synthase 2 (413 aa).

The 410-residue stretch at 3–412 folds into the Ketosynthase family 3 (KS3) domain; it reads KRRVVVTGLG…GTNGSLIFKK (410 aa). Catalysis depends on for beta-ketoacyl synthase activity residues C164, H304, and H341.

Belongs to the thiolase-like superfamily. Beta-ketoacyl-ACP synthases family. Homodimer.

It carries out the reaction a fatty acyl-[ACP] + malonyl-[ACP] + H(+) = a 3-oxoacyl-[ACP] + holo-[ACP] + CO2. The enzyme catalyses (9Z)-hexadecenoyl-[ACP] + malonyl-[ACP] + H(+) = 3-oxo-(11Z)-octadecenoyl-[ACP] + holo-[ACP] + CO2. The protein operates within lipid metabolism; fatty acid biosynthesis. In terms of biological role, involved in the type II fatty acid elongation cycle. Catalyzes the elongation of a wide range of acyl-ACP by the addition of two carbons from malonyl-ACP to an acyl acceptor. Can efficiently catalyze the conversion of palmitoleoyl-ACP (cis-hexadec-9-enoyl-ACP) to cis-vaccenoyl-ACP (cis-octadec-11-enoyl-ACP), an essential step in the thermal regulation of fatty acid composition. This is 3-oxoacyl-[acyl-carrier-protein] synthase 2 (fabF) from Escherichia coli O157:H7.